The primary structure comprises 421 residues: D-amino acid dehydrogenase (421 aa).

4–18 (VLVLGSGVVGLTSAW) contacts FAD.

It belongs to the DadA oxidoreductase family. It depends on FAD as a cofactor.

The catalysed reaction is a D-alpha-amino acid + A + H2O = a 2-oxocarboxylate + AH2 + NH4(+). Functionally, oxidative deamination of D-amino acids. The protein is D-amino acid dehydrogenase of Vibrio cholerae serotype O1 (strain ATCC 39315 / El Tor Inaba N16961).